We begin with the raw amino-acid sequence, 308 residues long: ADP-L-glycero-D-manno-heptose-6-epimerase (308 aa).

NADP(+)-binding positions include 10–11, 31–32, Lys38, Lys53, 75–79, and Asn92; these read MI, DN, and EGACS. Tyr140 serves as the catalytic Proton acceptor. Lys144 is a binding site for NADP(+). Asn169 provides a ligand contact to substrate. NADP(+)-binding residues include Val170 and Lys178. Residue Lys178 is the Proton acceptor of the active site. Substrate-binding positions include Ser180, His187, 201–204, Arg209, and Tyr272; that span reads FEGS.

It belongs to the NAD(P)-dependent epimerase/dehydratase family. HldD subfamily. Homopentamer. NADP(+) is required as a cofactor.

The enzyme catalyses ADP-D-glycero-beta-D-manno-heptose = ADP-L-glycero-beta-D-manno-heptose. It participates in nucleotide-sugar biosynthesis; ADP-L-glycero-beta-D-manno-heptose biosynthesis; ADP-L-glycero-beta-D-manno-heptose from D-glycero-beta-D-manno-heptose 7-phosphate: step 4/4. Functionally, catalyzes the interconversion between ADP-D-glycero-beta-D-manno-heptose and ADP-L-glycero-beta-D-manno-heptose via an epimerization at carbon 6 of the heptose. The polypeptide is ADP-L-glycero-D-manno-heptose-6-epimerase (Actinobacillus pleuropneumoniae serotype 7 (strain AP76)).